The chain runs to 815 residues: Neuronal PAS domain-containing protein 2 (815 aa).

The span at 1 to 10 shows a compositional bias: basic and acidic residues; sequence MDEDEKDRAK. A disordered region spans residues 1-21; sequence MDEDEKDRAKRASRNKSEKKR. Residues 1-61 form a sufficient for heterodimer formation with BMAL1, E-box binding and for the effect of NADPH region; sequence MDEDEKDRAK…VIGFLQKHNE (61 aa). The bHLH domain maps to 9–59; sequence AKRASRNKSEKKRRDQFNVLIKELSSMLPGNTRKMDKTTVLEKVIGFLQKH. A PAS 1 domain is found at 82-152; sequence NEEFTQLMLE…KMLSSCMLMT (71 aa). Heme b contacts are provided by His-119 and His-171. Residues 237–307 enclose the PAS 2 domain; that stretch reads FLKEMCIVEE…RCHEHLMQFG (71 aa). The PAC domain occupies 311 to 354; it reads SCCYRFLTKGQQWIWLQTHYYITYHQWNSKPEFIVCTHMVVSYA. Low complexity predominate over residues 405-420; sequence RTPSVSSRSSPKSSHT. 3 disordered regions span residues 405 to 467, 584 to 656, and 728 to 815; these read RTPS…SLPS, PGQI…AAGC, and FATT…QPLR. 3 stretches are compositionally biased toward polar residues: residues 425 to 462, 588 to 608, and 616 to 630; these read PAST…TALQ, ASPQ…SSQG, and ELTT…STAT. Low complexity-rich tracts occupy residues 633-655 and 732-752; these read GPST…SAAG and PPSQ…HQQQ. The segment covering 753 to 786 has biased composition (polar residues); that stretch reads RYLQVQTPSSLHNEQTDSLLLSSYSPQQGNMGYH. A compositionally biased stretch (low complexity) spans 787 to 815; sequence QTQQQQQQQQLPRRSNSLSESSNLPQPLR.

In terms of assembly, component of the circadian clock oscillator which includes the CRY proteins, CLOCK or NPAS2, BMAL1 or BMAL2, CSNK1D and/or CSNK1E, TIMELESS and the PER proteins. Efficient DNA binding requires dimerization with another bHLH protein. Forms a heterodimer with BMAL1 and this heterodimerization is required for E-box-dependent transactivation. Heme serves as cofactor. As to expression, expressed in the retinal photoreceptor cells (at protein level). Expressed in the pineal gland and retina.

The protein resides in the nucleus. Its activity is regulated as follows. Carbon monoxide (CO) and the redox state of the cell can modulate the transcriptional activity of the NPAS2-BMAL1 heterodimer. NADH and NADPH enhance the DNA-binding activity of the heterodimer whereas CO binds the heme group in NPAS2 and inhibits the DNA-binding activity of the heterodimer. Transcriptional activator which forms a core component of the circadian clock. The circadian clock, an internal time-keeping system, regulates various physiological processes through the generation of approximately 24 hour circadian rhythms in gene expression, which are translated into rhythms in metabolism and behavior. It is derived from the Latin roots 'circa' (about) and 'diem' (day) and acts as an important regulator of a wide array of physiological functions including metabolism, sleep, body temperature, blood pressure, endocrine, immune, cardiovascular, and renal function. Consists of two major components: the central clock, residing in the suprachiasmatic nucleus (SCN) of the brain, and the peripheral clocks that are present in nearly every tissue and organ system. Both the central and peripheral clocks can be reset by environmental cues, also known as Zeitgebers (German for 'timegivers'). The predominant Zeitgeber for the central clock is light, which is sensed by retina and signals directly to the SCN. The central clock entrains the peripheral clocks through neuronal and hormonal signals, body temperature and feeding-related cues, aligning all clocks with the external light/dark cycle. Circadian rhythms allow an organism to achieve temporal homeostasis with its environment at the molecular level by regulating gene expression to create a peak of protein expression once every 24 hours to control when a particular physiological process is most active with respect to the solar day. Transcription and translation of core clock components (CLOCK, NPAS2, BMAL1, BMAL2, PER1, PER2, PER3, CRY1 and CRY2) plays a critical role in rhythm generation, whereas delays imposed by post-translational modifications (PTMs) are important for determining the period (tau) of the rhythms (tau refers to the period of a rhythm and is the length, in time, of one complete cycle). A diurnal rhythm is synchronized with the day/night cycle, while the ultradian and infradian rhythms have a period shorter and longer than 24 hours, respectively. Disruptions in the circadian rhythms contribute to the pathology of cardiovascular diseases, cancer, metabolic syndromes and aging. A transcription/translation feedback loop (TTFL) forms the core of the molecular circadian clock mechanism. Transcription factors, CLOCK or NPAS2 and BMAL1 or BMAL2, form the positive limb of the feedback loop, act in the form of a heterodimer and activate the transcription of core clock genes and clock-controlled genes (involved in key metabolic processes), harboring E-box elements (5'-CACGTG-3') within their promoters. The core clock genes: PER1/2/3 and CRY1/2 which are transcriptional repressors form the negative limb of the feedback loop and interact with the CLOCK|NPAS2-BMAL1|BMAL2 heterodimer inhibiting its activity and thereby negatively regulating their own expression. This heterodimer also activates nuclear receptors NR1D1/2 and RORA/B/G, which form a second feedback loop and which activate and repress BMAL1 transcription, respectively. NPAS2 positively regulates the circadian expression of AANAT in the retinal photoreceptor cells. In Gallus gallus (Chicken), this protein is Neuronal PAS domain-containing protein 2 (NPAS2).